Reading from the N-terminus, the 385-residue chain is Probable thioesterase PNKD (385 aa).

Polar residues predominate over residues 31–42; that stretch reads NKASQNRSRALQ. The interval 31-57 is disordered; the sequence is NKASQNRSRALQSHSSPECKEEPEPLS. Residues histidine 172, histidine 174, aspartate 176, histidine 177, histidine 229, aspartate 253, and histidine 291 each contribute to the Zn(2+) site.

Belongs to the metallo-beta-lactamase superfamily. Glyoxalase II family. It depends on Zn(2+) as a cofactor. Post-translationally, undergoes cleavage at the N-terminus.

It is found in the cell membrane. The protein localises to the mitochondrion. The enzyme catalyses a thioester + H2O = a thiol + a carboxylate + H(+). Functionally, probable thioesterase that may play a role in cellular detoxification processes; it likely acts on a yet-unknown alpha-hydroxythioester substrate. In vitro, it is able to catalyze the hydrolysis of S-D-lactoyl-glutathione to form glutathione and D-lactic acid at very low rate, though this reaction is not physiologically relevant in vivo. The polypeptide is Probable thioesterase PNKD (PNKD) (Bos taurus (Bovine)).